The sequence spans 203 residues: NADH-quinone oxidoreductase subunit C (203 aa).

Belongs to the complex I 30 kDa subunit family. In terms of assembly, NDH-1 is composed of 14 different subunits. Subunits NuoB, C, D, E, F, and G constitute the peripheral sector of the complex.

The protein resides in the cell inner membrane. The enzyme catalyses a quinone + NADH + 5 H(+)(in) = a quinol + NAD(+) + 4 H(+)(out). In terms of biological role, NDH-1 shuttles electrons from NADH, via FMN and iron-sulfur (Fe-S) centers, to quinones in the respiratory chain. The immediate electron acceptor for the enzyme in this species is believed to be ubiquinone. Couples the redox reaction to proton translocation (for every two electrons transferred, four hydrogen ions are translocated across the cytoplasmic membrane), and thus conserves the redox energy in a proton gradient. The chain is NADH-quinone oxidoreductase subunit C from Methylibium petroleiphilum (strain ATCC BAA-1232 / LMG 22953 / PM1).